The sequence spans 394 residues: uncharacterized protein (394 aa).

11 helical membrane passes run 10–30 (PALIVLMSIATGLAVASNYYA), 50–70 (FIVTAAQLGYAAGLLFLVPLG), 79–99 (IVSMTLLAAGGMLITASSQSL), 100–120 (AMMILGTALTGLFSVVAQILV), 138–158 (TIMSGLLLGILLARTVAGLLA), 166–186 (VFWVASVLMALMALALWRGLP), 218–238 (LLGCLTFANFSILWTSMAFLL), 243–263 (FNYSDGVIGLFGLAGAAGALG), 291–311 (WLAIWFGHTSVLALIIGILVL), 337–357 (LTAGYMTSYFIGGAAGSLISA), and 364–384 (GWAGVCLAGATIALVNLLVWW).

It belongs to the major facilitator superfamily.

Its subcellular location is the cell inner membrane. This is an uncharacterized protein from Escherichia coli O157:H7.